Consider the following 959-residue polypeptide: Glycine dehydrogenase (decarboxylating) (959 aa).

An N6-(pyridoxal phosphate)lysine modification is found at Lys704.

The protein belongs to the GcvP family. As to quaternary structure, the glycine cleavage system is composed of four proteins: P, T, L and H. The cofactor is pyridoxal 5'-phosphate.

It catalyses the reaction N(6)-[(R)-lipoyl]-L-lysyl-[glycine-cleavage complex H protein] + glycine + H(+) = N(6)-[(R)-S(8)-aminomethyldihydrolipoyl]-L-lysyl-[glycine-cleavage complex H protein] + CO2. In terms of biological role, the glycine cleavage system catalyzes the degradation of glycine. The P protein binds the alpha-amino group of glycine through its pyridoxal phosphate cofactor; CO(2) is released and the remaining methylamine moiety is then transferred to the lipoamide cofactor of the H protein. This is Glycine dehydrogenase (decarboxylating) from Parasynechococcus marenigrum (strain WH8102).